The chain runs to 274 residues: Dermonecrotic toxin SdSicTox-betaIIB1aii (274 aa).

His5 is an active-site residue. Residues Glu25 and Asp27 each contribute to the Mg(2+) site. The active-site Nucleophile is the His41. Disulfide bonds link Cys45-Cys51 and Cys47-Cys190. Asp85 contributes to the Mg(2+) binding site.

Belongs to the arthropod phospholipase D family. Class II subfamily. It depends on Mg(2+) as a cofactor. Expressed by the venom gland.

It is found in the secreted. It catalyses the reaction an N-(acyl)-sphingosylphosphocholine = an N-(acyl)-sphingosyl-1,3-cyclic phosphate + choline. The catalysed reaction is an N-(acyl)-sphingosylphosphoethanolamine = an N-(acyl)-sphingosyl-1,3-cyclic phosphate + ethanolamine. The enzyme catalyses a 1-acyl-sn-glycero-3-phosphocholine = a 1-acyl-sn-glycero-2,3-cyclic phosphate + choline. It carries out the reaction a 1-acyl-sn-glycero-3-phosphoethanolamine = a 1-acyl-sn-glycero-2,3-cyclic phosphate + ethanolamine. Functionally, dermonecrotic toxins cleave the phosphodiester linkage between the phosphate and headgroup of certain phospholipids (sphingolipid and lysolipid substrates), forming an alcohol (often choline) and a cyclic phosphate. This toxin acts on sphingomyelin (SM). It may also act on ceramide phosphoethanolamine (CPE), lysophosphatidylcholine (LPC) and lysophosphatidylethanolamine (LPE), but not on lysophosphatidylserine (LPS), and lysophosphatidylglycerol (LPG). It acts by transphosphatidylation, releasing exclusively cyclic phosphate products as second products. Induces dermonecrosis, hemolysis, increased vascular permeability, edema, inflammatory response, and platelet aggregation. The protein is Dermonecrotic toxin SdSicTox-betaIIB1aii of Sicarius cf. damarensis (strain GJB-2008) (Six-eyed sand spider).